Reading from the N-terminus, the 460-residue chain is 4-O-methyl-glucuronoyl methylesterase (460 aa).

A signal peptide spans 1–17 (MASRFFALLLLAIPIQA). At glutamine 18 the chain carries Pyrrolidone carboxylic acid. The CBM1 domain occupies 18–53 (QSPVWGQCGGIGWSGPTTCVGGATCVSYNPYYSQCI). Intrachain disulfides connect cysteine 96/cysteine 131, cysteine 277/cysteine 412, and cysteine 309/cysteine 384. The GXSYXG catalytic site motif motif lies at 276-281 (GCSRNG). Serine 278 serves as the catalytic Nucleophile. The substrate site is built by lysine 282, glutamine 324, glutamate 332, and tryptophan 375. Histidine 411 (proton donor/acceptor) is an active-site residue. Asparagine 447 carries N-linked (GlcNAc...) asparagine glycosylation.

This sequence belongs to the carbohydrate esterase 15 (CE15) family.

It is found in the secreted. It catalyses the reaction a 4-O-methyl-alpha-D-glucuronosyl ester derivative + H2O = 4-O-methyl-alpha-D-glucuronate derivative + an alcohol + H(+). Its function is as follows. Glucuronoyl esterase which may play a significant role in biomass degradation, as it is considered to disconnect hemicellulose from lignin through the hydrolysis of the ester bond between 4-O-methyl-D-glucuronic acid residues of glucuronoxylans and aromatic alcohols of lignin. Does not hydrolyze substrates of other carbohydrate esterases such as acetylxylan esterase, acetyl esterase and feruloyl esterase. The sequence is that of 4-O-methyl-glucuronoyl methylesterase from Hypocrea jecorina (strain QM6a) (Trichoderma reesei).